Here is a 775-residue protein sequence, read N- to C-terminus: Semaphorin-3E (775 aa).

The signal sequence occupies residues 1-25 (MAPAGHILTLLLWGHLLELWTPGHS). The 485-residue stretch at 32–516 (RLRLSHKELL…SASAVAQVRF (485 aa)) folds into the Sema domain. N44 is a glycosylation site (N-linked (GlcNAc...) asparagine). C105 and C115 are disulfide-bonded. A glycan (N-linked (GlcNAc...) asparagine) is linked at N126. Residues C133 and C142 are joined by a disulfide bond. N-linked (GlcNAc...) asparagine glycosylation is found at N175 and N330. 3 disulfides stabilise this stretch: C270–C382, C294–C342, and C519–C537. The Ig-like C2-type domain maps to 581–669 (ALDRTEERLA…NFVHTVRKIT (89 aa)). A glycan (N-linked (GlcNAc...) asparagine) is linked at N596. A disulfide bridge connects residues C654 and C729.

The protein belongs to the semaphorin family. In terms of assembly, interacts with PLXND1. As to expression, detected in neurons in the thalamus. Detected in embryonic vasculature. Developing lungs, developing skeletal elements and ventral horns of the developing neural tube. Correlates positively with tumor progression.

It localises to the secreted. Its function is as follows. Plays an important role in signaling via the cell surface receptor PLXND1. Mediates reorganization of the actin cytoskeleton, leading to the retraction of cell projections. Promotes focal adhesion disassembly and inhibits adhesion of endothelial cells to the extracellular matrix. Regulates angiogenesis, both during embryogenesis and after birth. Can down-regulate sprouting angiogenesis. Required for normal vascular patterning during embryogenesis. Plays an important role in ensuring the specificity of synapse formation. The chain is Semaphorin-3E (Sema3e) from Mus musculus (Mouse).